A 421-amino-acid polypeptide reads, in one-letter code: Queuine tRNA-ribosyltransferase accessory subunit 2 (421 aa).

The Zn(2+) site is built by Cys328, Cys330, Cys333, and His359.

The protein belongs to the queuine tRNA-ribosyltransferase family. QTRT2 subfamily. As to quaternary structure, heterodimer of a catalytic subunit and an accessory subunit. Zn(2+) serves as cofactor.

Its subcellular location is the cytoplasm. Non-catalytic subunit of the queuine tRNA-ribosyltransferase (TGT) that catalyzes the base-exchange of a guanine (G) residue with queuine (Q) at position 34 (anticodon wobble position) in tRNAs with GU(N) anticodons (tRNA-Asp, -Asn, -His and -Tyr), resulting in the hypermodified nucleoside queuosine (7-(((4,5-cis-dihydroxy-2-cyclopenten-1-yl)amino)methyl)-7-deazaguanosine). The sequence is that of Queuine tRNA-ribosyltransferase accessory subunit 2 from Aedes aegypti (Yellowfever mosquito).